Consider the following 522-residue polypeptide: DNA-binding protein Ikaros (522 aa).

2 disordered regions span residues 1–48 and 96–115; these read MEME…HNNR and AKVNGSHAGGPDSKGPYSSA. C2H2-type zinc fingers lie at residues 125–147, 153–175, 181–203, and 209–232; these read LKCDICGIVCIGPNVLMVHKRSH, FQCTQCGASFTQKGNLLRHIKLH, FKCHLCNYACRRRDALSGHLRTH, and HKCAYCGRSYKQRSSLEEHKERCH. Residues 379-406 are disordered; that stretch reads KSASSEKDGSPSHSGQDSTDTESNNEEK. 2 consecutive C2H2-type zinc fingers follow at residues 468–490 and 496–520; these read YRCEHCRILFLDHVMYTIHMGCH and FECNLCGHRSQDRYEFSSHMTRGEH.

This sequence belongs to the Ikaros C2H2-type zinc-finger protein family. In terms of tissue distribution, expression mainly limited to thymus, spleen and pronephros. Very low expression in liver. No expression in testis, brain, eye and muscle.

It localises to the nucleus. Functionally, binds and activates the enhancer (delta-A element) of the CD3-delta gene. Functions in the specification and the maturation of the T-lymphocyte. Also interacts with a critical control element in the TDT (terminal deoxynucleotidyltransferase) promoter as well as with the promoters for other genes expressed during early stages of B- and T-cell development. Function is isoform-specific and is modulated by dominant-negative inactive isoforms. In Oncorhynchus mykiss (Rainbow trout), this protein is DNA-binding protein Ikaros (ikzf1).